A 1212-amino-acid polypeptide reads, in one-letter code: DNA-directed RNA polymerase subunit beta (1212 aa).

Positions 1176-1195 are enriched in basic and acidic residues; it reads QQEKKKLAEEAAKKDDKSAE. A disordered region spans residues 1176–1212; it reads QQEKKKLAEEAAKKDDKSAEPVDQSDSSTSSDDKVSK.

The protein belongs to the RNA polymerase beta chain family. In terms of assembly, the RNAP catalytic core consists of 2 alpha, 1 beta, 1 beta' and 1 omega subunit. When a sigma factor is associated with the core the holoenzyme is formed, which can initiate transcription.

The catalysed reaction is RNA(n) + a ribonucleoside 5'-triphosphate = RNA(n+1) + diphosphate. Functionally, DNA-dependent RNA polymerase catalyzes the transcription of DNA into RNA using the four ribonucleoside triphosphates as substrates. The chain is DNA-directed RNA polymerase subunit beta from Lactobacillus gasseri (strain ATCC 33323 / DSM 20243 / BCRC 14619 / CIP 102991 / JCM 1131 / KCTC 3163 / NCIMB 11718 / NCTC 13722 / AM63).